We begin with the raw amino-acid sequence, 399 residues long: Rhodopsin, G0-coupled (399 aa).

Over 1-17 (MPFPLNRTDTALVISPS) the chain is Extracellular. Asn-6 carries an N-linked (GlcNAc...) asparagine glycan. The helical transmembrane segment at 18–43 (EFRIIGIFISICCIIGVLGNLLIIIV) threads the bilayer. Residues 44–55 (FAKRRSVRRPIN) lie on the Cytoplasmic side of the membrane. A helical membrane pass occupies residues 56-81 (FFVLNLAVSDLIVALLGYPMTAASAF). Residues 82–95 (SNRWIFDNIGCKIY) are Extracellular-facing. Cys-92 and Cys-169 form a disulfide bridge. Residues 96-115 (AFLCFNSGVISIMTHAALSF) traverse the membrane as a helical segment. Residues 116–134 (CRYIIICQYGYRKKITQTT) are Cytoplasmic-facing. A helical transmembrane segment spans residues 135–158 (VLRTLFSIWSFAMFWTLSPLFGWS). Residues 159-182 (SYVIEVVPVSCSVNWYGHGLGDVS) lie on the Extracellular side of the membrane. The helical transmembrane segment at 183–210 (YTISVIVAVYVFPLSIIVFSYGMILQEK) threads the bilayer. At 211 to 240 (VCKDSRKNGIRAQQRYTPRFIQDIEQRVTF) the chain is on the cytoplasmic side. A helical membrane pass occupies residues 241 to 263 (ISFLMMAAFMVAWTPYAIMSALA). Residues 264–271 (IGSFNVEN) are Extracellular-facing. The helical transmembrane segment at 272-295 (SFAALPTLFAKASCAYNPFIYAFT) threads the bilayer. At Lys-282 the chain carries N6-(retinylidene)lysine. Residues 296 to 399 (NANFRDTVVE…NTFTADFSVI (104 aa)) lie on the Cytoplasmic side of the membrane.

This sequence belongs to the G-protein coupled receptor 1 family. Opsin subfamily. Phosphorylated on some or all of the serine and threonine residues present in the C-terminal region. As to expression, retina. Expressed in the hyperpolarizing cell layer of the photoreceptor cells with its photoreceptive region adjacent to the lens.

It localises to the membrane. In terms of biological role, visual pigments are the light-absorbing molecules that mediate vision. They consist of an apoprotein, opsin, covalently linked to cis-retinal. In Mizuhopecten yessoensis (Japanese scallop), this protein is Rhodopsin, G0-coupled (SCOP2).